Here is a 133-residue protein sequence, read N- to C-terminus: Phosphoribosyl-AMP cyclohydrolase (133 aa).

Residue aspartate 77 participates in Mg(2+) binding. Residue cysteine 78 coordinates Zn(2+). Aspartate 79 and aspartate 81 together coordinate Mg(2+). Residues cysteine 95 and cysteine 102 each contribute to the Zn(2+) site.

This sequence belongs to the PRA-CH family. As to quaternary structure, homodimer. The cofactor is Mg(2+). Zn(2+) serves as cofactor.

It localises to the cytoplasm. The catalysed reaction is 1-(5-phospho-beta-D-ribosyl)-5'-AMP + H2O = 1-(5-phospho-beta-D-ribosyl)-5-[(5-phospho-beta-D-ribosylamino)methylideneamino]imidazole-4-carboxamide. It functions in the pathway amino-acid biosynthesis; L-histidine biosynthesis; L-histidine from 5-phospho-alpha-D-ribose 1-diphosphate: step 3/9. In terms of biological role, catalyzes the hydrolysis of the adenine ring of phosphoribosyl-AMP. The sequence is that of Phosphoribosyl-AMP cyclohydrolase from Azotobacter vinelandii (strain DJ / ATCC BAA-1303).